The sequence spans 580 residues: Probable mediator of RNA polymerase II transcription subunit 26a (580 aa).

Residues 108 to 183 (DEVMRIRDIL…AEWKRLVDQW (76 aa)) enclose the TFIIS N-terminal domain. 3 stretches are compositionally biased toward basic and acidic residues: residues 244–255 (RHSVESKHERKS), 280–290 (QTRREEADVRP), and 299–309 (VEPKRQTKQSR). The interval 244 to 337 (RHSVESKHER…RKLAGPQQDK (94 aa)) is disordered. Positions 347–368 (FEFAKRKLQESYHQHENAKRQR) form a coiled coil.

It belongs to the Mediator complex subunit 26 family. In terms of assembly, component of the Mediator complex.

It localises to the nucleus. In terms of biological role, component of the Mediator complex, a coactivator involved in the regulated transcription of nearly all RNA polymerase II-dependent genes. Mediator functions as a bridge to convey information from gene-specific regulatory proteins to the basal RNA polymerase II transcription machinery. The Mediator complex, having a compact conformation in its free form, is recruited to promoters by direct interactions with regulatory proteins and serves for the assembly of a functional preinitiation complex with RNA polymerase II and the general transcription factors. May play a role in transcription elongation. The protein is Probable mediator of RNA polymerase II transcription subunit 26a (MED26A) of Arabidopsis thaliana (Mouse-ear cress).